The following is a 470-amino-acid chain: Cysteine--tRNA ligase (470 aa).

C28 contributes to the Zn(2+) binding site. The 'HIGH' region signature appears at 30 to 40; the sequence is PTVYNYIHIGN. Residues C212, H237, and E241 each coordinate Zn(2+). A 'KMSKS' region motif is present at residues 271 to 275; that stretch reads KMSKS. ATP is bound at residue K274.

The protein belongs to the class-I aminoacyl-tRNA synthetase family. As to quaternary structure, monomer. Zn(2+) is required as a cofactor.

It localises to the cytoplasm. The enzyme catalyses tRNA(Cys) + L-cysteine + ATP = L-cysteinyl-tRNA(Cys) + AMP + diphosphate. This is Cysteine--tRNA ligase from Limosilactobacillus reuteri (strain DSM 20016) (Lactobacillus reuteri).